An 874-amino-acid chain; its full sequence is Probable inorganic carbon transporter subunit DabA (874 aa).

4 residues coordinate Zn(2+): C398, D400, H580, and C595.

It belongs to the inorganic carbon transporter (TC 9.A.2) DabA family. Forms a complex with DabB. It depends on Zn(2+) as a cofactor.

The protein localises to the cell membrane. Its function is as follows. Part of an energy-coupled inorganic carbon pump. The sequence is that of Probable inorganic carbon transporter subunit DabA from Bacillus cereus (strain ATCC 10987 / NRS 248).